The primary structure comprises 270 residues: Replication protein A 32 kDa subunit (270 aa).

An N-acetylmethionine modification is found at M1. Phosphoserine; by PRKDC occurs at positions 4 and 8. T21 bears the Phosphothreonine; by PRKDC mark. A disordered region spans residues 22-41 (QSPGGFGSPTPSQAEKKSRA). A Phosphoserine; by CDK2 modification is found at S23. S29 is modified (phosphoserine; by CDK1). The residue at position 33 (S33) is a Phosphoserine; by PRKDC. Glycyl lysine isopeptide (Lys-Gly) (interchain with G-Cter in ubiquitin) cross-links involve residues K37 and K38. Positions 74 to 148 (VTIVGIIRHA…KSLVAFKIIP (75 aa)) form a DNA-binding region, OB. An interaction with RAD52, TIPIN, UNG and XPA region spans residues 187 to 270 (GMGEPGNFSG…DDHFKSTDAE (84 aa)).

It belongs to the replication factor A protein 2 family. As to quaternary structure, component of the replication protein A complex (RPA/RP-A), a heterotrimeric complex composed of RPA1, RPA2 and RPA3. Interacts with PRPF19; the PRP19-CDC5L complex is recruited to the sites of DNA repair where it ubiquitinates the replication protein A complex (RPA). Interacts with SERTAD3. Interacts with TIPIN. Interacts with TIMELESS. Interacts with PPP4R2; the interaction is direct, DNA damage-dependent and mediates the recruitment of the PP4 catalytic subunit PPP4C. Interacts (hyperphosphorylated) with RAD51. Interacts with SMARCAL1; the interaction is direct and mediates the recruitment to the RPA complex of SMARCAL1. Interacts with RAD52 and XPA; those interactions are direct and associate RAD52 and XPA to the RPA complex. Interacts with FBH1. Interacts with ETAA1; the interaction is direct and promotes ETAA1 recruitment at stalled replication forks. Interacts with DDI2. Interacts (in unphosphorylated form via N-terminus) with EIF4EBP3; the interaction enhances EIF4EBP3-mediated inhibition of EIF4E-mediated mRNA nuclear export. Interacts with nuclear UNG (isoform 2); this interaction mediates UNG recruitment to RPA-coated single-stranded DNA at stalled replication forks. Post-translationally, differentially phosphorylated throughout the cell cycle, becoming phosphorylated at the G1-S transition and dephosphorylated in late mitosis. Mainly phosphorylated at Ser-23 and Ser-29, by cyclin A-CDK2 and cyclin B-CDK1, respectively during DNA replication and mitosis. Dephosphorylation may require the serine/threonine-protein phosphatase 4. Phosphorylation at Ser-23 and Ser-29 is a prerequisite for further phosphorylation. Becomes hyperphosphorylated on additional residues including Ser-4, Ser-8, Thr-21 and Ser-33 in response to DNA damage. Hyperphosphorylation is mediated by ATM, ATR and PRKDC. Primarily recruited to DNA repair nuclear foci as a hypophosphorylated form it undergoes subsequent hyperphosphorylation, catalyzed by ATR. Hyperphosphorylation is required for RAD51 recruitment to chromatin and efficient DNA repair. Phosphorylation at Thr-21 depends upon RFWD3 presence. DNA damage-induced 'Lys-63'-linked polyubiquitination by PRPF19 mediates ATRIP recruitment to the RPA complex at sites of DNA damage and activation of ATR. Ubiquitinated by RFWD3 at stalled replication forks in response to DNA damage: ubiquitination by RFWD3 does not lead to degradation by the proteasome and promotes removal of the RPA complex from stalled replication forks, promoting homologous recombination.

It is found in the nucleus. Its subcellular location is the PML body. Functionally, as part of the heterotrimeric replication protein A complex (RPA/RP-A), binds and stabilizes single-stranded DNA intermediates, that form during DNA replication or upon DNA stress. It prevents their reannealing and in parallel, recruits and activates different proteins and complexes involved in DNA metabolism. Thereby, it plays an essential role both in DNA replication and the cellular response to DNA damage. In the cellular response to DNA damage, the RPA complex controls DNA repair and DNA damage checkpoint activation. Through recruitment of ATRIP activates the ATR kinase a master regulator of the DNA damage response. It is required for the recruitment of the DNA double-strand break repair factors RAD51 and RAD52 to chromatin in response to DNA damage. Also recruits to sites of DNA damage proteins like XPA and XPG that are involved in nucleotide excision repair and is required for this mechanism of DNA repair. Also plays a role in base excision repair (BER) probably through interaction with UNG. Also recruits SMARCAL1/HARP, which is involved in replication fork restart, to sites of DNA damage. May also play a role in telomere maintenance. The polypeptide is Replication protein A 32 kDa subunit (Rpa2) (Rattus norvegicus (Rat)).